The following is a 281-amino-acid chain: Protease HtpX homolog (281 aa).

A run of 2 helical transmembrane segments spans residues 6–26 (VWLL…AIGG) and 28–48 (SGAL…YYYS). Residue His130 coordinates Zn(2+). Glu131 is an active-site residue. His134 contacts Zn(2+). 2 helical membrane-spanning segments follow: residues 140–160 (VLIG…SNIV) and 181–201 (IASL…QLAI). A Zn(2+)-binding site is contributed by Glu206.

It belongs to the peptidase M48B family. The cofactor is Zn(2+).

It is found in the cell membrane. The protein is Protease HtpX homolog of Pelotomaculum thermopropionicum (strain DSM 13744 / JCM 10971 / SI).